Here is a 1060-residue protein sequence, read N- to C-terminus: DNA-directed RNA polymerase subunit beta (1060 aa).

It belongs to the RNA polymerase beta chain family. In terms of assembly, in plastids the minimal PEP RNA polymerase catalytic core is composed of four subunits: alpha, beta, beta', and beta''. When a (nuclear-encoded) sigma factor is associated with the core the holoenzyme is formed, which can initiate transcription.

It is found in the plastid. Its subcellular location is the chloroplast. The enzyme catalyses RNA(n) + a ribonucleoside 5'-triphosphate = RNA(n+1) + diphosphate. Its function is as follows. DNA-dependent RNA polymerase catalyzes the transcription of DNA into RNA using the four ribonucleoside triphosphates as substrates. This chain is DNA-directed RNA polymerase subunit beta, found in Lactuca sativa (Garden lettuce).